The primary structure comprises 252 residues: Proteasome subunit alpha type-7-1B (252 aa).

This sequence belongs to the peptidase T1A family. In terms of assembly, the 26S proteasome consists of a 20S proteasome core and two 19S regulatory subunits. The 20S proteasome core is composed of 28 subunits that are arranged in four stacked rings, resulting in a barrel-shaped structure. The two end rings are each formed by seven alpha subunits, and the two central rings are each formed by seven beta subunits. The catalytic chamber with the active sites is on the inside of the barrel. In terms of tissue distribution, testis specific.

The protein localises to the cytoplasm. Its subcellular location is the nucleus. Functionally, the proteasome is a multicatalytic proteinase complex which is characterized by its ability to cleave peptides with Arg, Phe, Tyr, Leu, and Glu adjacent to the leaving group at neutral or slightly basic pH. The proteasome has an ATP-dependent proteolytic activity. The protein is Proteasome subunit alpha type-7-1B (Prosalpha4T2) of Drosophila melanogaster (Fruit fly).